The sequence spans 907 residues: Catenin alpha-1 (907 aa).

The residue at position 2 (Thr2) is an N-acetylthreonine. Residues Thr2–Cys228 form an involved in homodimerization region. Lys57 participates in a covalent cross-link: Glycyl lysine isopeptide (Lys-Gly) (interchain with G-Cter in SUMO2). The segment at Val97–Tyr148 is interaction with JUP and CTNNB1. Ser264, Ser268, Ser296, and Ser298 each carry phosphoserine. Residues Thr326–Phe395 are interaction with alpha-actinin. Position 635 is a phosphothreonine (Thr635). Phosphoserine is present on Ser642. Thr646 bears the Phosphothreonine mark. A phosphoserine mark is found at Ser653 and Ser656. Thr659 carries the phosphothreonine modification. Residue Lys798 forms a Glycyl lysine isopeptide (Lys-Gly) (interchain with G-Cter in SUMO2) linkage. Residue Ser852 is modified to Phosphoserine. The segment covering Pro865–Thr881 has biased composition (basic and acidic residues). The disordered stretch occupies residues Pro865–Val895. Residues Lys882–Val892 show a composition bias toward basic residues.

This sequence belongs to the vinculin/alpha-catenin family. As to quaternary structure, monomer and homodimer; the monomer preferentially binds to CTNNB1 and the homodimer to actin. Component of an cadherin:catenin adhesion complex composed of at least of CDH26, beta-catenin/CTNNB1, alpha-catenin/CTNNA1 and p120 catenin/CTNND1. Possible component of an E-cadherin/ catenin adhesion complex together with E-cadherin/CDH1 and beta-catenin/CTNNB1 or gamma-catenin/JUP; the complex is located to adherens junctions. The stable association of CTNNA1 is controversial as CTNNA1 was shown not to bind to F-actin when assembled in the complex. Alternatively, the CTNNA1-containing complex may be linked to F-actin by other proteins such as LIMA1. Binds AFDN and F-actin. Interacts with ARHGAP21. Interacts with AJUBA. Interacts with LIMA1. Interacts with vinculin/VCL. Interacts with TJP2/ZO2 (via N-terminus). Interacts with TJP1/ZO1 (via N-terminus). Sumoylated. Post-translationally, phosphorylation seems to contribute to the strength of cell-cell adhesion rather than to the basic capacity for cell-cell adhesion.

It is found in the cytoplasm. The protein resides in the cytoskeleton. Its subcellular location is the cell junction. It localises to the adherens junction. The protein localises to the cell membrane. It is found in the nucleus. In terms of biological role, associates with the cytoplasmic domain of a variety of cadherins. The association of catenins to cadherins produces a complex which is linked to the actin filament network, and which seems to be of primary importance for cadherins cell-adhesion properties. Can associate with both E- and N-cadherins. Originally believed to be a stable component of E-cadherin/catenin adhesion complexes and to mediate the linkage of cadherins to the actin cytoskeleton at adherens junctions. In contrast, cortical actin was found to be much more dynamic than E-cadherin/catenin complexes and CTNNA1 was shown not to bind to F-actin when assembled in the complex suggesting a different linkage between actin and adherens junctions components. The homodimeric form may regulate actin filament assembly and inhibit actin branching by competing with the Arp2/3 complex for binding to actin filaments. Involved in the regulation of WWTR1/TAZ, YAP1 and TGFB1-dependent SMAD2 and SMAD3 nuclear accumulation. May play a crucial role in cell differentiation. This is Catenin alpha-1 from Oryctolagus cuniculus (Rabbit).